The sequence spans 242 residues: tRNA uridine(34) hydroxylase (242 aa).

A Rhodanese domain is found at 128–222 (DGREVVMLDT…YFEETGGPGY (95 aa)). The Cysteine persulfide intermediate role is filled by C182.

Belongs to the TrhO family.

The catalysed reaction is uridine(34) in tRNA + AH2 + O2 = 5-hydroxyuridine(34) in tRNA + A + H2O. Its function is as follows. Catalyzes oxygen-dependent 5-hydroxyuridine (ho5U) modification at position 34 in tRNAs. This chain is tRNA uridine(34) hydroxylase, found in Bordetella avium (strain 197N).